Reading from the N-terminus, the 582-residue chain is Transcription factor tau subunit sfc6 (582 aa).

Residues 1-97 form a disordered region; the sequence is MGPKSKEYEN…SAKKQSSKGL (97 aa). Residues 18 to 39 show a composition bias toward acidic residues; it reads EDNDDDGDFVLENVMSEEDIEI. Residues 63-87 show a composition bias toward polar residues; the sequence is QPLTPSSSKGAGNEPKSQNSSTTRG. WD repeat units follow at residues 221–262, 268–314, and 326–369; these read TQFL…NFKS, HDWG…VKFH, and FNDS…ECPL.

As to quaternary structure, component of the TFIIIC complex including sfc1, sfc3, sfc4, sfc6 and sfc7. The subunits are organized in two globular domains, tauA and tauB, connected by a proteolysis-sensitive and flexible linker. Interacts with sfc1, sfc3 and sfc4.

It is found in the nucleus. TFIIIC mediates tRNA and 5S RNA gene activation by binding to intragenic promoter elements. Upstream of the transcription start site, TFIIIC assembles the initiation complex TFIIIB-TFIIIC-tDNA, which is sufficient for RNA polymerase III recruitment and function. Part of the tauB domain of TFIIIC that binds boxB DNA promoter sites of tRNA and similar genes. Cooperates with sfc3 in DNA binding. Localizes to chromatin insulator sequence without recruiting RNA polymerase III and plays a role in nuclear organization. This is Transcription factor tau subunit sfc6 from Schizosaccharomyces pombe (strain 972 / ATCC 24843) (Fission yeast).